Consider the following 590-residue polypeptide: Glutamine--fructose-6-phosphate aminotransferase [isomerizing] (590 aa).

Residue cysteine 2 is the Nucleophile; for GATase activity of the active site. The region spanning 2–221 (CGIIGIVSSK…DGELGFITTS (220 aa)) is the Glutamine amidotransferase type-2 domain. SIS domains follow at residues 286-422 (IIAE…DNTN) and 445-580 (IGEE…PDKP). Lysine 585 acts as the For Fru-6P isomerization activity in catalysis.

As to quaternary structure, homodimer.

Its subcellular location is the cytoplasm. The enzyme catalyses D-fructose 6-phosphate + L-glutamine = D-glucosamine 6-phosphate + L-glutamate. In terms of biological role, catalyzes the first step in hexosamine metabolism, converting fructose-6P into glucosamine-6P using glutamine as a nitrogen source. In Sulfolobus acidocaldarius (strain ATCC 33909 / DSM 639 / JCM 8929 / NBRC 15157 / NCIMB 11770), this protein is Glutamine--fructose-6-phosphate aminotransferase [isomerizing].